The primary structure comprises 1091 residues: TATA element modulatory factor (1091 aa).

2 disordered regions span residues 42–86 (IPYG…KPVR) and 100–280 (FLSP…DAKS). Residues 57-81 (WDTSTWGLNSTSSEPQSPPTASQAI) are compositionally biased toward polar residues. Residues Ser73, Ser78, Ser112, and Ser136 each carry the phosphoserine modification. Low complexity-rich tracts occupy residues 111–122 (KSPVVSKPPSKS), 131–142 (SSLQESSSPGQS), and 194–211 (SENV…TTST). Ser213 is subject to Phosphoserine. The segment covering 217-234 (ETKDMALEPKEQKHEDRQ) has biased composition (basic and acidic residues). 2 stretches are compositionally biased toward low complexity: residues 242–253 (VSSFSSGTSTTS) and 264–273 (ISESSASSRQ). Phosphoserine is present on residues Ser324, Ser326, Ser329, Ser334, Ser340, and Ser357. Residues 329-338 (SLDSRSVSEI) form an interaction with Elongin BC complex region. A disordered region spans residues 360-443 (TPKTKVVEST…NQPKAPPEKE (84 aa)). The span at 368–379 (STEENAEEEEGN) shows a compositional bias: acidic residues. Phosphoserine occurs at positions 411 and 540. Coiled-coil stretches lie at residues 443 to 767 (EDVC…STAR) and 824 to 894 (IQMS…SQLE). Ser923 and Ser926 each carry phosphoserine. Thr927 carries the post-translational modification Phosphothreonine. Phosphoserine is present on Ser931. Positions 984-1090 (IENLQSQLKL…QIDELLRQRL (107 aa)) form a coiled coil.

As to quaternary structure, component of the SNF/SWI transcription factor complexes. Interacts with RAB6A. Interacts with TCEB1. Interacts with STAT3 and FER. Interacts with TRNP1; may regulate TRNP1 proteasomal degradation. In terms of processing, phosphorylated by FER.

It localises to the cytoplasm. It is found in the nucleus. The protein localises to the golgi apparatus membrane. Its function is as follows. Potential coactivator of the androgen receptor. May play critical roles in two RAB6-dependent retrograde transport processes: one from endosomes to the Golgi and the other from the Golgi to the ER. Mediates STAT3 degradation. This Mus musculus (Mouse) protein is TATA element modulatory factor (Tmf1).